The sequence spans 1881 residues: MIAFGAPRRRSFGLLFSLAPHLFFLFLIGTLANKLNVPQVLLPFSREPGRVPFLLEAQRGCYIWHSTHHDAVTIQPLYENGTSCSQRAVLVAESTQPIRLSSIILAREVVTDHELRCDVKVDVIDNIEIVSRTRELYVDDAPLELMVRALDSKGNTFSTLAGMVFEWSIAQDNESSREELSSKIRILKYSEAEYSPPDYIIEMEKQERQGDVILVSGMRTGAAVVKVRIYEPFYKKVAAALIRLLVLENIFLIPSHDTYLLVGAYIKYRVAKMVQGRMTEVNFPLEHYTLELQDHRLTNGGLPSKSVALLDEKTAMVTAVQLGQTNLVFVHKNVHMRSVSGLPNSTIYVVEPGFLGFSIHPGGRWSLEVGQVYVITVEVFDKSSTRVYISDNLKITFQFSKEYFEEQLSTSNGSYHVVKALKDGVVVINATLTSSLQERNSSQPKTYQISHQQEVKIYFPIQLKPSFLAFPHHPLGISNRFTVQVEGGSGNFTWSSSNETVAMVTTKGVVTAGQVRGNSTILARDVQNPSRSGDIKVYVMKLNKMELLPFQADVEIGQIIEVPIAMYHVNTETKEAIAFTDCSHLPLDLNSDKQGVFTLFKEGIQKPGAMHCSSVHIAATSPGHTLVTVSVTGHEEHAWSSATFAAYEPLKALNPVDVALVTWQSVKEMVFEGGPHPWILEPSRFFLELSMEKAEAIRVAEVRLPAKRKQNQYVYRVLCLELGEQVLTFRIGNHPGVLNPSPSVEKVQVRFICAHPASMLVTPMYKAPSGTQPCPLPQYNKQLIPVSSLRDSVLELAVFDQHGRKFDNFSSLMLEWKSSNETLAHFEDSKSVEMVARDDGSGQTRLHGHQILKVHQMKGTVLIGVNFAGYSGKKSPKGISNSPRSAGVELILVEDVTVQPENATIYNHPDVKEIFNLVEGSGYFLINSSEQDIVTITYREAESSVQLVPAHPGFLTLEVYDLCLAYLGPAVAQIRVSDIQELELDLIDKVEIGKTVLVVVRVLGSSKHPFRNKYFRNMEVRLQLASAIVTLRLMEDQDEYSENYMLRAVTVGQTTLVAIATDRMGKKFTSAPRHIEVFPPFRLIPEKMTLIATNMMQIMSEGGPQPQSIIHFSISNQTVAVVNRRGQVTGKSVGTAVLHGTIQTVNEDTGKVIVFSQDEVQIEVVQLQAVRILAAATRLVTATEMPVYVMGVTSTQTPFSFSNASPLLTFHWSMSKRDVLDLVPRHSEVFLQLPAENNFAMVVHTKAAGRTTIKVTVRSENSSSGQLEGNLLELSDEIQILVFEKLQLFYANCQPEQILMPMNSQLKLHTNREGAAFVSSRVLKCFPNSSVIEEDGGGLLRSGSIAGTAVLEVTSIEPFGVNQTTITGVQVAPVTYLRLSSYPKLYTAQGRTLSAFPLGMSLTFIVEFYNNIGEKFHTHNTRLYMALNRDDLLLIGPGNRNYTYMAQAVNKGVTVVGLWDQRHPGMADYIPVAVEHAIEPDTKLIFVGDVICFSTQLVNQHGEPGVWMISTNNIVQTDTATGVGVARNPGTATIFHNIPGVVKTFREVVVNASSRLTLSYDLKTYLTNTPNATAFKLFISTGRNVNLKGSCTPSQALAIEKVLLPETLMLCHVQFSNTLLDIPASKVFHIHSEFSVEKGVYVCLIKVRQESKELRQVLSVADTSVYGWATLVSERGKNGMQRILIPFIPGFYMNQSEFVLGHKDTGELRILGVERVLESLEVFHSSPFLAVSGYKHSMLTTGLTVYLVRIVNFTAFQQMSSPAFINVSCALTNQQEAVIVRAKDASGADHCEDSGVFKNFVGSYQILLFTLFAVLASTSFIFLAHNAFLNKVQTIPVVYVPTTGTTQPGSYTATCSPPHFLSSRPPLVQSRLQHWLWSIKH.

The first 32 residues, 1-32, serve as a signal peptide directing secretion; sequence MIAFGAPRRRSFGLLFSLAPHLFFLFLIGTLA. N-linked (GlcNAc...) asparagine glycosylation is found at Asn80, Asn344, and Asn808. The BIG2 domain maps to 1078–1150; the sequence is FPPFRLIPEK…TIQTVNEDTG (73 aa). Residue Asn1441 is glycosylated (N-linked (GlcNAc...) asparagine). A helical transmembrane segment spans residues 1804–1824; that stretch reads YQILLFTLFAVLASTSFIFLA.

The protein belongs to the NUP210 family. In terms of tissue distribution, expressed in testis.

It localises to the nucleus membrane. The protein localises to the nucleus. Its subcellular location is the nucleoplasm. The protein is Nuclear pore membrane glycoprotein 210-like (Nup210l) of Mus musculus (Mouse).